A 417-amino-acid chain; its full sequence is D-amino acid dehydrogenase (417 aa).

Residue 3–17 (AVVLGSGVVGLMSAW) participates in FAD binding.

It belongs to the DadA oxidoreductase family. Requires FAD as cofactor.

The catalysed reaction is a D-alpha-amino acid + A + H2O = a 2-oxocarboxylate + AH2 + NH4(+). Functionally, oxidative deamination of D-amino acids. This chain is D-amino acid dehydrogenase, found in Vibrio vulnificus (strain CMCP6).